The chain runs to 476 residues: Arginine biosynthesis bifunctional protein ArgJ, mitochondrial (476 aa).

Positions 193, 219, 237, 337, 471, and 476 each coordinate substrate. The active-site Nucleophile is the Thr-237.

Belongs to the ArgJ family. As to quaternary structure, heterodimer of an alpha and a beta chain. In terms of processing, the alpha and beta chains are autoproteolytically processed from a single precursor protein within the mitochondrion.

Its subcellular location is the mitochondrion matrix. The enzyme catalyses N(2)-acetyl-L-ornithine + L-glutamate = N-acetyl-L-glutamate + L-ornithine. The catalysed reaction is L-glutamate + acetyl-CoA = N-acetyl-L-glutamate + CoA + H(+). The protein operates within amino-acid biosynthesis; L-arginine biosynthesis; L-ornithine and N-acetyl-L-glutamate from L-glutamate and N(2)-acetyl-L-ornithine (cyclic): step 1/1. Its pathway is amino-acid biosynthesis; L-arginine biosynthesis; N(2)-acetyl-L-ornithine from L-glutamate: step 1/4. Its function is as follows. Catalyzes two activities which are involved in the cyclic version of arginine biosynthesis: the synthesis of acetylglutamate from glutamate and acetyl-CoA, and of ornithine by transacetylation between acetylornithine and glutamate. This Cryptococcus neoformans var. neoformans serotype D (strain B-3501A) (Filobasidiella neoformans) protein is Arginine biosynthesis bifunctional protein ArgJ, mitochondrial.